A 501-amino-acid polypeptide reads, in one-letter code: Bifunctional purine biosynthesis protein PurH (501 aa).

The MGS-like domain occupies 1-144 (MKKRALISVF…KNFKDVVVLS (144 aa)).

It belongs to the PurH family.

The catalysed reaction is (6R)-10-formyltetrahydrofolate + 5-amino-1-(5-phospho-beta-D-ribosyl)imidazole-4-carboxamide = 5-formamido-1-(5-phospho-D-ribosyl)imidazole-4-carboxamide + (6S)-5,6,7,8-tetrahydrofolate. It catalyses the reaction IMP + H2O = 5-formamido-1-(5-phospho-D-ribosyl)imidazole-4-carboxamide. The protein operates within purine metabolism; IMP biosynthesis via de novo pathway; 5-formamido-1-(5-phospho-D-ribosyl)imidazole-4-carboxamide from 5-amino-1-(5-phospho-D-ribosyl)imidazole-4-carboxamide (10-formyl THF route): step 1/1. Its pathway is purine metabolism; IMP biosynthesis via de novo pathway; IMP from 5-formamido-1-(5-phospho-D-ribosyl)imidazole-4-carboxamide: step 1/1. In Clostridium perfringens (strain ATCC 13124 / DSM 756 / JCM 1290 / NCIMB 6125 / NCTC 8237 / Type A), this protein is Bifunctional purine biosynthesis protein PurH.